The sequence spans 156 residues: Ribosomal RNA large subunit methyltransferase H (156 aa).

S-adenosyl-L-methionine-binding positions include L73, G104, and 123–128; that span reads LSALTL.

It belongs to the RNA methyltransferase RlmH family. Homodimer.

It localises to the cytoplasm. The catalysed reaction is pseudouridine(1915) in 23S rRNA + S-adenosyl-L-methionine = N(3)-methylpseudouridine(1915) in 23S rRNA + S-adenosyl-L-homocysteine + H(+). Functionally, specifically methylates the pseudouridine at position 1915 (m3Psi1915) in 23S rRNA. The polypeptide is Ribosomal RNA large subunit methyltransferase H (Shewanella oneidensis (strain ATCC 700550 / JCM 31522 / CIP 106686 / LMG 19005 / NCIMB 14063 / MR-1)).